The following is a 178-amino-acid chain: Peptide deformylase (178 aa).

2 residues coordinate Fe cation: C102 and H144. E145 is a catalytic residue. H148 lines the Fe cation pocket.

It belongs to the polypeptide deformylase family. The cofactor is Fe(2+).

It catalyses the reaction N-terminal N-formyl-L-methionyl-[peptide] + H2O = N-terminal L-methionyl-[peptide] + formate. Its function is as follows. Removes the formyl group from the N-terminal Met of newly synthesized proteins. Requires at least a dipeptide for an efficient rate of reaction. N-terminal L-methionine is a prerequisite for activity but the enzyme has broad specificity at other positions. The polypeptide is Peptide deformylase (Leptospira borgpetersenii serovar Hardjo-bovis (strain JB197)).